A 315-amino-acid chain; its full sequence is Probable cell division protein WhiA (315 aa).

Positions 275 to 309 (NLKELGEMVPSGVVSKSGINHRLRKINEIADKIRE) form a DNA-binding region, H-T-H motif.

This sequence belongs to the WhiA family.

Its function is as follows. Involved in cell division and chromosome segregation. This Brevibacillus brevis (strain 47 / JCM 6285 / NBRC 100599) protein is Probable cell division protein WhiA.